The sequence spans 784 residues: MKKRIPTLLATMIATALYSQQGLAADLASQCMLGVPSYDRPLVQGDTNDLPVTINADHAKGDYPDDAVFTGSVDIMQGNSRLQADEVQLHQKEAPGQPEPVRTVDALGNVHYDDNQVILKGPKGWANLNTKDTNVWEGDYQMVGRQGRGKADLMKQRGENRYTILDNGSFTSCLPGSDTWSVVGSEIIHDREEQVAEIWNARFKVGPVPIFYSPYLQLPVGDKRRSGFLIPNAKYTTTNYFEFYLPYYWNIAANMDATITPHYMHRRGNIMWENEFRYLSQAGAGLMELDYLPSDKVYKDEHPNDDSSRRWLFYWQHSGVMDQVWRFNVDYTKVSDPSYFNDFDNKYGSSTDGYATQKFSVGYAVQNFNATVSTKQFQVFSEQNTSSYSAEPQLDVNYYQNDVGPFDTRIYGQAVHFVNTRDDMPEATRVHLEPTINLPLSNNWGSINTEAKLLATHYQQTNLDWYNSRNTTKLDESVNRVMPQFKVDGKMVFERDMEMLAPGYTQTLEPRAQYLYVPYRDQSDIYNYDSSLLQSDYSGLFRGRTYGGLDRIASANQVTTGVTSRIYDDAAVERFNISVGQIYYFTESRTGDDNITWENDDKTGSLVWAGDTYWRISERWGLRGGIQYDTRLDNVATSNSSIEYRRDEDRLVQLNYRYASPEYIQATLPKYYSTAEQYKNGISQVGAVASWPIADRWSIVGAYYYDTNANKQADSMLGVQYSSCCYAIRVGYERKPNGWDNDKQHAVYDNAIGFNIELRGLSSNYGLGTQEMLRSNILPYQNTL.

The first 24 residues, 1 to 24 (MKKRIPTLLATMIATALYSQQGLA), serve as a signal peptide directing secretion. 2 disulfide bridges follow: C31–C724 and C173–C725.

This sequence belongs to the LptD family. As to quaternary structure, component of the lipopolysaccharide transport and assembly complex. Interacts with LptE and LptA. Contains two intramolecular disulfide bonds.

Its subcellular location is the cell outer membrane. Functionally, together with LptE, is involved in the assembly of lipopolysaccharide (LPS) at the surface of the outer membrane. This Shigella dysenteriae serotype 1 (strain Sd197) protein is LPS-assembly protein LptD.